The sequence spans 95 residues: MAKKSMIARDVKRAKLVDKYAEKRAELKKRIAAGDMEAMFELNKLPKDSSAVRKRNRCQLDGRPRGYMREFGISRVKFRQLAGAGVIPGVKKSSW.

The protein belongs to the universal ribosomal protein uS14 family. As to quaternary structure, part of the 30S ribosomal subunit. Contacts proteins S3 and S10.

Functionally, binds 16S rRNA, required for the assembly of 30S particles and may also be responsible for determining the conformation of the 16S rRNA at the A site. This chain is Small ribosomal subunit protein uS14, found in Fusobacterium nucleatum subsp. nucleatum (strain ATCC 25586 / DSM 15643 / BCRC 10681 / CIP 101130 / JCM 8532 / KCTC 2640 / LMG 13131 / VPI 4355).